We begin with the raw amino-acid sequence, 264 residues long: Mitochondrial distribution and morphology protein 12 (264 aa).

Residues 1-232 (MSFDINWNKI…WPSWINLDFN (232 aa)) form the SMP-LTD domain. A disordered region spans residues 240–264 (ESSSSAEESLPHRDDAQDFSADARA). Residues 248 to 264 (SLPHRDDAQDFSADARA) show a composition bias toward basic and acidic residues.

The protein belongs to the MDM12 family. Component of the ER-mitochondria encounter structure (ERMES) or MDM complex, composed of MMM1, MDM10, MDM12 and MDM34. An MMM1 homodimer associates with one molecule of MDM12 on each side in a pairwise head-to-tail manner, and the SMP-LTD domains of MMM1 and MDM12 generate a continuous hydrophobic tunnel for phospholipid trafficking.

It localises to the mitochondrion outer membrane. The protein localises to the endoplasmic reticulum membrane. Its function is as follows. Component of the ERMES/MDM complex, which serves as a molecular tether to connect the endoplasmic reticulum (ER) and mitochondria. Components of this complex are involved in the control of mitochondrial shape and protein biogenesis, and function in nonvesicular lipid trafficking between the ER and mitochondria. MDM12 is required for the interaction of the ER-resident membrane protein MMM1 and the outer mitochondrial membrane-resident beta-barrel protein MDM10. The MDM12-MMM1 subcomplex functions in the major beta-barrel assembly pathway that is responsible for biogenesis of all mitochondrial outer membrane beta-barrel proteins, and acts in a late step after the SAM complex. The MDM10-MDM12-MMM1 subcomplex further acts in the TOM40-specific pathway after the action of the MDM12-MMM1 complex. Essential for establishing and maintaining the structure of mitochondria and maintenance of mtDNA nucleoids. The protein is Mitochondrial distribution and morphology protein 12 of Eremothecium gossypii (strain ATCC 10895 / CBS 109.51 / FGSC 9923 / NRRL Y-1056) (Yeast).